The following is a 344-amino-acid chain: L-rhamnose-proton symporter (344 aa).

Transmembrane regions (helical) follow at residues 4–24 (AITM…CFYA), 38–58 (WSVG…ALLL), 68–88 (FNLS…IGNI), 101–121 (MGIG…TPII), 131–151 (TEGG…VGIV), 175–195 (LLLA…MNAA), 214–234 (LPSY…FCFI), 259–279 (ILLS…YAWG), 290–310 (MSWM…GLVL), and 321–341 (VAVL…VGLG).

Belongs to the L-rhamnose transporter (TC 2.A.7.6) family.

The protein localises to the cell inner membrane. It catalyses the reaction L-rhamnopyranose(in) + H(+)(in) = L-rhamnopyranose(out) + H(+)(out). In terms of biological role, uptake of L-rhamnose across the cytoplasmic membrane with the concomitant transport of protons into the cell (symport system). The chain is L-rhamnose-proton symporter from Salmonella typhi.